Reading from the N-terminus, the 197-residue chain is Small ribosomal subunit protein uS4c (197 aa).

An S4 RNA-binding domain is found at 82-143 (MRLDNILFRL…KQRSKALIQN (62 aa)).

This sequence belongs to the universal ribosomal protein uS4 family. In terms of assembly, part of the 30S ribosomal subunit. Contacts protein S5. The interaction surface between S4 and S5 is involved in control of translational fidelity.

The protein localises to the plastid. Its subcellular location is the chloroplast. One of the primary rRNA binding proteins, it binds directly to 16S rRNA where it nucleates assembly of the body of the 30S subunit. Functionally, with S5 and S12 plays an important role in translational accuracy. This Gladiolus papilio (Goldblotch gladiolus) protein is Small ribosomal subunit protein uS4c (rps4).